We begin with the raw amino-acid sequence, 219 residues long: Large ribosomal subunit protein uL4 (219 aa).

The tract at residues 43 to 100 (AAKRQGTHSTKTRGEVSGGGKKPYRQKGTGRARQGSTRAPQFTGGGTVHGPQPRDYSQ) is disordered.

It belongs to the universal ribosomal protein uL4 family. Part of the 50S ribosomal subunit.

Functionally, one of the primary rRNA binding proteins, this protein initially binds near the 5'-end of the 23S rRNA. It is important during the early stages of 50S assembly. It makes multiple contacts with different domains of the 23S rRNA in the assembled 50S subunit and ribosome. Forms part of the polypeptide exit tunnel. The sequence is that of Large ribosomal subunit protein uL4 from Mycobacterium sp. (strain JLS).